Here is a 653-residue protein sequence, read N- to C-terminus: ATP-dependent zinc metalloprotease FtsH 1 (653 aa).

The interval 1 to 20 is disordered; sequence MPENKNDKENKNDKENKNTK. The Cytoplasmic portion of the chain corresponds to 1-30; that stretch reads MPENKNDKENKNDKENKNTKEEKKKVKFSN. The helical transmembrane segment at 31-51 threads the bilayer; it reads IIWVYIIFAVFFIGALISLNW. At 52–126 the chain is on the periplasmic side; the sequence is ENNPIISYSE…EYVESVGTKW (75 aa). Residues 127–147 traverse the membrane as a helical segment; the sequence is WFGLLINIIPIVVMVLFFFWL. At 148 to 653 the chain is on the cytoplasmic side; it reads YRSASAGARS…VVNHVNYQPV (506 aa). 219-226 contacts ATP; that stretch reads GPPGTGKT. Residue H441 coordinates Zn(2+). E442 is a catalytic residue. Residues H445 and D518 each coordinate Zn(2+).

In the central section; belongs to the AAA ATPase family. The protein in the C-terminal section; belongs to the peptidase M41 family. As to quaternary structure, homohexamer. It depends on Zn(2+) as a cofactor.

The protein resides in the cell inner membrane. Its function is as follows. Acts as a processive, ATP-dependent zinc metallopeptidase for both cytoplasmic and membrane proteins. Plays a role in the quality control of integral membrane proteins. This is ATP-dependent zinc metalloprotease FtsH 1 from Petrotoga mobilis (strain DSM 10674 / SJ95).